We begin with the raw amino-acid sequence, 126 residues long: Histone H2B type 1-C/E/G (126 aa).

Low complexity predominate over residues 1–12; that stretch reads MPEPAKSAPAPK. A disordered region spans residues 1–36; it reads MPEPAKSAPAPKKGSKKAVTKAQKKDGKKRKRSRKE. P2 is modified (N-acetylproline). E3 is modified (ADP-ribosyl glutamic acid). Residue K6 is modified to N6-(2-hydroxyisobutyryl)lysine; alternate. K6 is subject to N6-(beta-hydroxybutyryl)lysine; alternate. An N6-acetyllysine; alternate modification is found at K6. Position 6 is an N6-butyryllysine; alternate (K6). At K6 the chain carries N6-crotonyllysine; alternate. An N6-lactoyllysine; alternate modification is found at K6. K6 participates in a covalent cross-link: Glycyl lysine isopeptide (Lys-Gly) (interchain with G-Cter in SUMO2); alternate. S7 carries the post-translational modification ADP-ribosylserine. K12 carries the N6-(beta-hydroxybutyryl)lysine; alternate modification. 2 positions are modified to N6-acetyllysine; alternate: K12 and K13. N6-crotonyllysine; alternate is present on residues K12 and K13. K12 is modified (N6-lactoyllysine; alternate). Position 13 is an N6-(2-hydroxyisobutyryl)lysine; alternate (K13). S15 is subject to Phosphoserine; by STK4/MST1. 4 positions are modified to N6-acetyllysine; alternate: K16, K17, K21, and K24. K16, K17, K21, and K24 each carry N6-crotonyllysine; alternate. N6-lactoyllysine; alternate is present on residues K16, K17, K21, and K24. Position 17 is an N6-glutaryllysine; alternate (K17). N6-(2-hydroxyisobutyryl)lysine; alternate occurs at positions 21 and 24. K21 carries the post-translational modification N6-(beta-hydroxybutyryl)lysine; alternate. The residue at position 21 (K21) is an N6-butyryllysine; alternate. K21 is covalently cross-linked (Glycyl lysine isopeptide (Lys-Gly) (interchain with G-Cter in SUMO2); alternate). Residue K25 is modified to N6-(2-hydroxyisobutyryl)lysine. The residue at position 35 (K35) is an N6-(2-hydroxyisobutyryl)lysine; alternate. At K35 the chain carries N6-(beta-hydroxybutyryl)lysine; alternate. The residue at position 35 (K35) is an N6-crotonyllysine; alternate. The residue at position 35 (K35) is an N6-glutaryllysine; alternate. An N6-succinyllysine; alternate modification is found at K35. K35 is covalently cross-linked (Glycyl lysine isopeptide (Lys-Gly) (interchain with G-Cter in ubiquitin); alternate). PolyADP-ribosyl glutamic acid is present on E36. At S37 the chain carries Phosphoserine; by AMPK. N6-(2-hydroxyisobutyryl)lysine; alternate is present on residues K44, K47, and K58. N6-lactoyllysine; alternate is present on K44. An N6-glutaryllysine; alternate mark is found at K44 and K47. An N6-methyllysine; alternate modification is found at K47. N6,N6-dimethyllysine; alternate is present on K58. R80 is modified (dimethylated arginine). The residue at position 86 (K86) is an N6-(2-hydroxyisobutyryl)lysine; alternate. K86 carries the post-translational modification N6-acetyllysine; alternate. K86 bears the N6-lactoyllysine; alternate mark. K86 is subject to N6,N6,N6-trimethyllysine; alternate. 2 positions are modified to omega-N-methylarginine: R87 and R93. K109 carries the N6-(2-hydroxyisobutyryl)lysine; alternate modification. N6-(beta-hydroxybutyryl)lysine; alternate is present on K109. K109 bears the N6-lactoyllysine; alternate mark. An N6-glutaryllysine; alternate modification is found at K109. K109 is subject to N6-methyllysine; alternate. S113 carries an O-linked (GlcNAc) serine glycan. T116 bears the Phosphothreonine mark. Residues K117 and K121 each carry the N6-(2-hydroxyisobutyryl)lysine; alternate modification. K117 carries the post-translational modification N6-(beta-hydroxybutyryl)lysine; alternate. N6-lactoyllysine; alternate occurs at positions 117 and 121. N6-glutaryllysine; alternate occurs at positions 117 and 121. K117 and K121 each carry N6-succinyllysine; alternate. K117 carries the N6-methylated lysine; alternate modification. K121 is covalently cross-linked (Glycyl lysine isopeptide (Lys-Gly) (interchain with G-Cter in ubiquitin); alternate).

Belongs to the histone H2B family. As to quaternary structure, the nucleosome is a histone octamer containing two molecules each of H2A, H2B, H3 and H4 assembled in one H3-H4 heterotetramer and two H2A-H2B heterodimers. The octamer wraps approximately 147 bp of DNA. Interacts with VRK1; the interaction is mediated by the nucleosome acidic patch, a cluster of negatively charged residues of H2A and H2B forming a cleft within the nucleosome core. Post-translationally, monoubiquitination at Lys-35 (H2BK34Ub) by the MSL1/MSL2 dimer is required for histone H3 'Lys-4' (H3K4me) and 'Lys-79' (H3K79me) methylation and transcription activation at specific gene loci, such as HOXA9 and MEIS1 loci. Similarly, monoubiquitination at Lys-121 (H2BK120Ub) by the RNF20/40 complex gives a specific tag for epigenetic transcriptional activation and is also prerequisite for histone H3 'Lys-4' and 'Lys-79' methylation. It also functions cooperatively with the FACT dimer to stimulate elongation by RNA polymerase II. H2BK120Ub also acts as a regulator of mRNA splicing: deubiquitination by USP49 is required for efficient cotranscriptional splicing of a large set of exons. Phosphorylated on Ser-15 (H2BS14ph) by STK4/MST1 during apoptosis; which facilitates apoptotic chromatin condensation. Also phosphorylated on Ser-15 in response to DNA double strand breaks (DSBs), and in correlation with somatic hypermutation and immunoglobulin class-switch recombination. Phosphorylation at Ser-37 (H2BS36ph) by AMPK in response to stress promotes transcription. In terms of processing, glcNAcylation at Ser-113 promotes monoubiquitination of Lys-121. It fluctuates in response to extracellular glucose, and associates with transcribed genes. Post-translationally, ADP-ribosylated by PARP1 or PARP2 on Ser-7 (H2BS6ADPr) in response to DNA damage. H2BS6ADPr promotes recruitment of CHD1L. Mono-ADP-ribosylated on Glu-3 (H2BE2ADPr) by PARP3 in response to single-strand breaks. Poly ADP-ribosylation on Glu-36 (H2BE35ADPr) by PARP1 regulates adipogenesis: it inhibits phosphorylation at Ser-37 (H2BS36ph), thereby blocking expression of pro-adipogenetic genes. Crotonylation (Kcr) is specifically present in male germ cells and marks testis-specific genes in post-meiotic cells, including X-linked genes that escape sex chromosome inactivation in haploid cells. Crotonylation marks active promoters and enhancers and confers resistance to transcriptional repressors. It is also associated with post-meiotically activated genes on autosomes. In terms of processing, hydroxybutyrylation of histones is induced by starvation. Post-translationally, lactylated in macrophages by EP300/P300 by using lactoyl-CoA directly derived from endogenous or exogenous lactate, leading to stimulates gene transcription.

Its subcellular location is the nucleus. The protein localises to the chromosome. Its function is as follows. Core component of nucleosome. Nucleosomes wrap and compact DNA into chromatin, limiting DNA accessibility to the cellular machineries which require DNA as a template. Histones thereby play a central role in transcription regulation, DNA repair, DNA replication and chromosomal stability. DNA accessibility is regulated via a complex set of post-translational modifications of histones, also called histone code, and nucleosome remodeling. The sequence is that of Histone H2B type 1-C/E/G from Mus musculus (Mouse).